Here is a 325-residue protein sequence, read N- to C-terminus: Natural cytotoxicity triggering receptor 1 (325 aa).

A signal peptide spans methionine 1–serine 16. Residues glutamine 17–arginine 258 are Extracellular-facing. 2 Ig-like domains span residues glycine 42 to tyrosine 100 and glycine 137 to glycine 192. A disulfide bridge links cysteine 49 with cysteine 98. Asparagine 139 carries N-linked (GlcNAc...) asparagine glycosylation. An intrachain disulfide couples cysteine 144 to cysteine 190. N-linked (GlcNAc...) asparagine glycosylation is present at asparagine 216. The chain crosses the membrane as a helical span at residues isoleucine 259–serine 279. The Cytoplasmic portion of the chain corresponds to arginine 280–methionine 325.

It belongs to the natural cytotoxicity receptor (NCR) family. As to quaternary structure, interacts with CD3Z and FCER1G. As to expression, weakly expressed in spleen, heart and lung.

It is found in the cell membrane. Its function is as follows. Cytotoxicity-activating receptor that may contribute to the increased efficiency of activated natural killer (NK) cells to mediate tumor cell lysis. The chain is Natural cytotoxicity triggering receptor 1 (Ncr1) from Rattus norvegicus (Rat).